The sequence spans 218 residues: Cold-regulated protein 28 (218 aa).

Disordered regions lie at residues 1–51 (MEND…ADSK) and 166–218 (TKHS…KPRT). Residues 20–37 (EASAESQSESTLSNSLDS) show a composition bias toward low complexity. A compositionally biased stretch (basic and acidic residues) spans 186–207 (GEVSKKREREANNDDSSLKEDQ).

Its subcellular location is the nucleus. In terms of biological role, together with COR27, involved in central circadian clock regulation and in flowering promotion, by binding to the chromatin of clock-associated evening genes TOC1, PRR5, ELF4 and cold-responsive genes in order to repress their transcription. Negative regulator of freezing tolerance. This Arabidopsis thaliana (Mouse-ear cress) protein is Cold-regulated protein 28.